A 130-amino-acid polypeptide reads, in one-letter code: Small ribosomal subunit protein uS9 (130 aa).

The protein belongs to the universal ribosomal protein uS9 family.

This Halorhodospira halophila (strain DSM 244 / SL1) (Ectothiorhodospira halophila (strain DSM 244 / SL1)) protein is Small ribosomal subunit protein uS9.